Reading from the N-terminus, the 181-residue chain is UPF0302 protein ABC1905 (181 aa).

This sequence belongs to the UPF0302 family.

In Shouchella clausii (strain KSM-K16) (Alkalihalobacillus clausii), this protein is UPF0302 protein ABC1905.